Here is a 558-residue protein sequence, read N- to C-terminus: Glucose-6-phosphate isomerase (558 aa).

A2 is subject to N-acetylalanine. N6-acetyllysine is present on K12. K34 is modified (N6-(2-hydroxyisobutyryl)lysine). Residue S107 is modified to Phosphoserine. T109 carries the post-translational modification Phosphothreonine. Position 142 is an N6-acetyllysine (K142). Position 159–160 (159–160 (GS)) interacts with D-glucose 6-phosphate. S185 carries the phosphoserine; by CK2 modification. A D-glucose 6-phosphate-binding site is contributed by 210 to 215 (SKTFTT). Residue T250 is modified to Phosphothreonine. Residues Q354, E358, and H389 each contribute to the D-glucose 6-phosphate site. Residue E358 is the Proton donor of the active site. H389 is a catalytic residue. The residue at position 454 (K454) is an N6-acetyllysine; alternate. K454 carries the post-translational modification N6-malonyllysine; alternate. Position 454 is an N6-succinyllysine; alternate (K454). At S455 the chain carries Phosphoserine. K519 is a D-glucose 6-phosphate binding site. K519 is an active-site residue.

The protein belongs to the GPI family. As to quaternary structure, homodimer; in the catalytically active form. Monomer in the secreted form. In terms of processing, phosphorylation at Ser-185 by CK2 has been shown to decrease enzymatic activity and may contribute to secretion by a non-classical secretory pathway. Post-translationally, ISGylated.

It localises to the cytoplasm. The protein localises to the secreted. The catalysed reaction is alpha-D-glucose 6-phosphate = beta-D-fructose 6-phosphate. The protein operates within carbohydrate degradation; glycolysis; D-glyceraldehyde 3-phosphate and glycerone phosphate from D-glucose: step 2/4. Strongly inhibited by erythrose 4-phosphate. Functionally, in the cytoplasm, catalyzes the conversion of glucose-6-phosphate to fructose-6-phosphate, the second step in glycolysis, and the reverse reaction during gluconeogenesis. Besides it's role as a glycolytic enzyme, also acts as a secreted cytokine: acts as an angiogenic factor (AMF) that stimulates endothelial cell motility. Acts as a neurotrophic factor, neuroleukin, for spinal and sensory neurons. It is secreted by lectin-stimulated T-cells and induces immunoglobulin secretion. This Homo sapiens (Human) protein is Glucose-6-phosphate isomerase.